The following is a 277-amino-acid chain: uncharacterized protein (277 aa).

The next 7 helical transmembrane spans lie at 23–43 (CIGGLMSAIVGAMSGVTTAFI), 61–81 (FLIYFGIIFIIGLIVSAIIGG), 117–137 (LVLLNIIFYFIPAILFVFGIF), 144–164 (IIGAFLIIISILIFIISVISL), 197–217 (YIILVIIIAIINFIISLIVVL), 221–241 (IIDIFISYSALANSILTIIYI), and 243–263 (IKGISYALSTFVDFYLGVFSI).

This sequence to M.jannaschii MJ1189.

Its subcellular location is the cell membrane. This is an uncharacterized protein from Methanocaldococcus jannaschii (strain ATCC 43067 / DSM 2661 / JAL-1 / JCM 10045 / NBRC 100440) (Methanococcus jannaschii).